The chain runs to 351 residues: Anthranilate phosphoribosyltransferase (351 aa).

5-phospho-alpha-D-ribose 1-diphosphate contacts are provided by residues G80, 83 to 84 (GD), T88, 90 to 93 (NIST), 108 to 116 (KHGNRSVTS), and S120. G80 contributes to the anthranilate binding site. S92 contacts Mg(2+). N111 contacts anthranilate. R166 lines the anthranilate pocket. Mg(2+)-binding residues include D229 and E230.

This sequence belongs to the anthranilate phosphoribosyltransferase family. In terms of assembly, homodimer. Mg(2+) serves as cofactor.

The enzyme catalyses N-(5-phospho-beta-D-ribosyl)anthranilate + diphosphate = 5-phospho-alpha-D-ribose 1-diphosphate + anthranilate. It participates in amino-acid biosynthesis; L-tryptophan biosynthesis; L-tryptophan from chorismate: step 2/5. Its function is as follows. Catalyzes the transfer of the phosphoribosyl group of 5-phosphorylribose-1-pyrophosphate (PRPP) to anthranilate to yield N-(5'-phosphoribosyl)-anthranilate (PRA). This Chlorobium chlorochromatii (strain CaD3) protein is Anthranilate phosphoribosyltransferase.